The following is a 2377-amino-acid chain: DNA (cytosine-5-)-methyltransferase DMT5 (2377 aa).

Positions 24-56 (GTADGAVNGGNIPNSQSQKRKRASPSPEIESEE) are disordered. The region spanning 62 to 126 (YEIDYIADSR…KNPGKPRLSP (65 aa)) is the Chromo; shadow subtype domain. The interval 150-282 (GKSRAASSTD…KSSLPKAKLR (133 aa)) is disordered. The segment covering 201–213 (PTSKKVHPNKKCK) has biased composition (basic residues). 2 stretches are compositionally biased toward acidic residues: residues 217–238 (DDESDFVFEEGEWDEDEDDDND) and 245–263 (EDDEDDEQERSAEEPESDE). Residues 268–282 (PAKKTKSSLPKAKLR) show a composition bias toward basic residues. The region spanning 347–753 (LRVATMCSGT…IAALKVACHK (407 aa)) is the SAM-dependent MTase C5-type domain. The active site involves cysteine 440. Residues 1450-1771 (AERPVMVRGG…RSIATFMGIH (322 aa)) form the Helicase ATP-binding domain. 1463–1470 (DQVGYGKT) is a binding site for ATP. 3 disordered regions span residues 1642–1680 (KGQAYRDKHDSDSKAKPITKEELERWEASEDEDDDENSK), 2313–2334 (KGRGSSISMTNEKRTPTLTVKS), and 2347–2377 (SSFRSKKRSMEARDAEGVSDDDENSELSDII). The span at 1645 to 1669 (AYRDKHDSDSKAKPITKEELERWEA) shows a compositional bias: basic and acidic residues. One can recognise a Helicase C-terminal domain in the interval 2152-2315 (KLEHLVNLIH…EIPQEEYKGR (164 aa)). Residues 2317-2334 (SSISMTNEKRTPTLTVKS) are compositionally biased toward polar residues. Acidic residues predominate over residues 2363–2377 (GVSDDDENSELSDII).

This sequence in the N-terminal section; belongs to the class I-like SAM-binding methyltransferase superfamily. C5-methyltransferase family. In the C-terminal section; belongs to the SNF2/RAD54 helicase family. Interacts with SWI6. Requires Mg(2+) as cofactor.

The protein resides in the nucleus. It localises to the chromosome. It catalyses the reaction a 2'-deoxycytidine in DNA + S-adenosyl-L-methionine + ATP + H2O = a 5-methyl-2'-deoxycytidine in DNA + S-adenosyl-L-homocysteine + ADP + phosphate + 2 H(+). Hemimethylated DNA substrates stimulate ATP hydrolysis and this is a prerequisite for methyltransferase activity. In terms of biological role, ATP-dependent cytosine methylase that maintains DNA methylation by acting at hemimethylated palindromic 5'-CG-3' sites to produce symmetrically methylated DNA strands. DNA methylation may play a role in transcriptional silencing, particularly at transposable elements. The sequence is that of DNA (cytosine-5-)-methyltransferase DMT5 from Cryptococcus neoformans var. grubii serotype A (strain H99 / ATCC 208821 / CBS 10515 / FGSC 9487) (Filobasidiella neoformans var. grubii).